We begin with the raw amino-acid sequence, 514 residues long: ATP synthase subunit alpha (514 aa).

An ATP-binding site is contributed by G170–T177.

It belongs to the ATPase alpha/beta chains family. In terms of assembly, F-type ATPases have 2 components, CF(1) - the catalytic core - and CF(0) - the membrane proton channel. CF(1) has five subunits: alpha(3), beta(3), gamma(1), delta(1), epsilon(1). CF(0) has three main subunits: a(1), b(2) and c(9-12). The alpha and beta chains form an alternating ring which encloses part of the gamma chain. CF(1) is attached to CF(0) by a central stalk formed by the gamma and epsilon chains, while a peripheral stalk is formed by the delta and b chains.

The protein resides in the cell inner membrane. The catalysed reaction is ATP + H2O + 4 H(+)(in) = ADP + phosphate + 5 H(+)(out). In terms of biological role, produces ATP from ADP in the presence of a proton gradient across the membrane. The alpha chain is a regulatory subunit. The sequence is that of ATP synthase subunit alpha from Pseudomonas fluorescens (strain SBW25).